The chain runs to 872 residues: Coatomer subunit gamma-2 (872 aa).

HEAT repeat units lie at residues 64–101 (MEATEAFFAMTRLFQSNDQTLRRMCYLTIKEMANISED), 283–320 (RELAPAVSVLQLFCSSPKPALRYAAVRTLNKVAMKHPS), 321–355 (AVTACNLDLENLITDSNRSIATLAITTLLKTGSES), 356–392 (SVDRLMKQISTFVSEISDEFKVVVVQAISALCQKYPR), 395–430 (SVMMTFLSNMLRDDGGFEYKRAIVDCIISIIEENPD), and 467–504 (PTPSKYIRFIFNRVVLENEAVRAAAVSALAKFGAQNEP).

Belongs to the COPG family. In terms of assembly, oligomeric complex.

It localises to the cytoplasm. It is found in the golgi apparatus membrane. Its subcellular location is the cytoplasmic vesicle. The protein resides in the COPI-coated vesicle membrane. In terms of biological role, the coatomer is a cytosolic protein complex that binds to dilysine motifs and reversibly associates with Golgi non-clathrin-coated vesicles, which further mediate biosynthetic protein transport from the ER, via the Golgi up to the trans Golgi network. Coatomer complex is required for budding from Golgi membranes, and is essential for the retrograde Golgi-to-ER transport of dilysine-tagged proteins. The protein is Coatomer subunit gamma-2 (copg2) of Xenopus tropicalis (Western clawed frog).